The following is a 312-amino-acid chain: Homoserine kinase (312 aa).

94-104 contributes to the ATP binding site; sequence PLGRGLGSSAA.

It belongs to the GHMP kinase family. Homoserine kinase subfamily.

It localises to the cytoplasm. It catalyses the reaction L-homoserine + ATP = O-phospho-L-homoserine + ADP + H(+). It functions in the pathway amino-acid biosynthesis; L-threonine biosynthesis; L-threonine from L-aspartate: step 4/5. In terms of biological role, catalyzes the ATP-dependent phosphorylation of L-homoserine to L-homoserine phosphate. This Caldanaerobacter subterraneus subsp. tengcongensis (strain DSM 15242 / JCM 11007 / NBRC 100824 / MB4) (Thermoanaerobacter tengcongensis) protein is Homoserine kinase.